The chain runs to 257 residues: Acetylglutamate kinase (257 aa).

Substrate-binding positions include 43 to 44 (GG), arginine 65, and asparagine 157. ATP-binding positions include 180–185 (DVSGIL) and 208–210 (IIT).

It belongs to the acetylglutamate kinase family. ArgB subfamily. In terms of assembly, homodimer.

The protein resides in the cytoplasm. The enzyme catalyses N-acetyl-L-glutamate + ATP = N-acetyl-L-glutamyl 5-phosphate + ADP. Its pathway is amino-acid biosynthesis; L-arginine biosynthesis; N(2)-acetyl-L-ornithine from L-glutamate: step 2/4. Its function is as follows. Catalyzes the ATP-dependent phosphorylation of N-acetyl-L-glutamate. The polypeptide is Acetylglutamate kinase (Pectobacterium atrosepticum (strain SCRI 1043 / ATCC BAA-672) (Erwinia carotovora subsp. atroseptica)).